A 486-amino-acid polypeptide reads, in one-letter code: MNFIKRAFWNMKAKKGKTLLQLFVFTVICVFVLSGLAIQSAAQKSSELARQELGGSVTLQVDRQKQMEKQQDSGEKRSFESTPIKVSDANKLAALDHVKSYNYTTSASANAGNFDAIESSSSSDSSSSSSSSNAKNSQGGGQGGPQMVQADLSIEGVISTALVDDFSDGDSKITDGRAITKSDVGKKVTVINETLAEENDLSVGDSITIESATDEDTTVKLKIVGIYKTTSSGDDQAQNFSFLNPYNKLYTPYTATAALKGDDYKNTIDSAVYYMDDAKNMDTFVKAAKKTSIDFDTYTLNTNDQLYQQMVGPIENVASFSKNVVYLVSVAGAVILGLIVMMSIRERKYEMGVLMAIGEKRWKLIGQFLTEILIVAVIAIGLASVTGNLVANQLGNQLLSQQISSSTDSTQTASGQMPGGGGGMGGKMFGHSSSNVDVIDSLNVAVSMNDMLILGGIGILIAIIATLLPSISVLRLHPKTILTKQE.

Residues 18 to 38 (TLLQLFVFTVICVFVLSGLAI) form a helical membrane-spanning segment. Positions 62–79 (DRQKQMEKQQDSGEKRSF) are enriched in basic and acidic residues. 2 disordered regions span residues 62-82 (DRQKQMEKQQDSGEKRSFEST) and 117-147 (IESSSSSDSSSSSSSSNAKNSQGGGQGGPQM). Low complexity predominate over residues 119 to 132 (SSSSSDSSSSSSSS). 3 helical membrane passes run 324–344 (VVYLVSVAGAVILGLIVMMSI), 365–385 (IGQFLTEILIVAVIAIGLASV), and 451–471 (MLILGGIGILIAIIATLLPSI).

It belongs to the ABC-4 integral membrane protein family.

The protein resides in the cell membrane. This is an uncharacterized protein from Bacillus subtilis (strain 168).